A 636-amino-acid chain; its full sequence is Transcription termination factor FttA (636 aa).

A KHa region spans residues 3–70 (SEMLEEIKRT…IIIRSDRSVL (68 aa)). The KHb stretch occupies residues 71 to 138 (MDPEKAIRKI…WAPKILRTPP (68 aa)). Residues 179–383 (WARLTAMGGF…LVMESTYGGH (205 aa)) form a metallo-beta-lactamase N-terminus region. Residues His242, His244, Asp246, His247, His329, and Asp352 each contribute to the Zn(2+) site. Residues 384–577 (EDVQPSRNRA…MNIKTIEGFS (194 aa)) are beta-Casp. The interval 578–636 (GHSDRRQLMEYVKRISPKPEKILLCHGDNYKTLDLASSIYRTYRIETKTPLNLETVRIQ) is metallo-beta-lactamase C-terminus. A Zn(2+)-binding site is contributed by His603.

Belongs to the metallo-beta-lactamase superfamily. RNA-metabolizing metallo-beta-lactamase-like family. FttA subfamily. As to quaternary structure, homodimer. Interacts with RNA polymerase (RNAP), interacts with the Spt4-Spt5 complex. Does not seem to interact with the RNA degrading exosome. Requires Zn(2+) as cofactor.

With respect to regulation, most active at 0.5 M or 0.7 M NaCl, less active at 1.0 M NaCl. Nuclease activity is inhibited by N,N,Tetrakis-(2-pyridylmethyl)-ethylene diamine (TPEN), a specific chelator of zinc ions. In terms of biological role, terminates transcription on the whole genome. Termination is linked to FttA-mediated RNA cleavage and does not require NTP hydrolysis. Cleaves endonucleolytically at the RNA exit channel of RNA polymerase (RNAP); the 5'-3' exonuclease activity of this protein degrades the nascent RNA released from RNAP. An RNA nuclease, it bind single-stranded RNA (ssRNA) with a preference for U-rich sequences. The polypeptide is Transcription termination factor FttA (Methanothermobacter thermautotrophicus (strain ATCC 29096 / DSM 1053 / JCM 10044 / NBRC 100330 / Delta H) (Methanobacterium thermoautotrophicum)).